The sequence spans 400 residues: Na(+)/H(+) antiporter NhaA (400 aa).

Helical transmembrane passes span 26–46 (AGGI…NSPL), 71–91 (LIHW…GMEV), 107–127 (IFPA…YWFI), 137–157 (GWAI…ALLS), 166–186 (IFLL…IALF), 189–209 (HGLS…LILL), 212–232 (FKVS…ASVL), 233–253 (KSGV…PLKG), 273–293 (FVIL…GIDV), 299–319 (PLLL…IFGF), 340–360 (IFAV…LASL), and 373–393 (LSRL…YLFL).

The protein belongs to the NhaA Na(+)/H(+) (TC 2.A.33) antiporter family.

It localises to the cell inner membrane. It carries out the reaction Na(+)(in) + 2 H(+)(out) = Na(+)(out) + 2 H(+)(in). Its function is as follows. Na(+)/H(+) antiporter that extrudes sodium in exchange for external protons. The sequence is that of Na(+)/H(+) antiporter NhaA from Haemophilus influenzae (strain 86-028NP).